Here is a 607-residue protein sequence, read N- to C-terminus: uncharacterized protein (607 aa).

The segment at residues 16 to 44 is a DNA-binding region (zn(2)-C6 fungal-type); that stretch reads CTVCRKRKLKCDGNKPCGRCIRLNTPKEC.

It is found in the nucleus. This is an uncharacterized protein from Saccharomyces cerevisiae (strain ATCC 204508 / S288c) (Baker's yeast).